The chain runs to 476 residues: Zinc metalloproteinase/disintegrin (476 aa).

The N-terminal stretch at 1–20 (MIQVLLVTICLAAFPYQGSS) is a signal peptide. The propeptide occupies 21-192 (IILESGNVND…ASQSNLTPEQ (172 aa)). The residue at position 193 (glutamine 193) is a Pyrrolidone carboxylic acid. Positions 198–393 (RYIELAVVAD…HNPQCILNKP (196 aa)) constitute a Peptidase M12B domain. Positions 201 and 285 each coordinate Ca(2+). Disulfide bonds link cysteine 309–cysteine 388, cysteine 348–cysteine 372, and cysteine 350–cysteine 355. Histidine 334 is a binding site for Zn(2+). The active site involves glutamate 335. Residues histidine 338 and histidine 344 each coordinate Zn(2+). Residues cysteine 388 and asparagine 391 each coordinate Ca(2+). Positions 394 to 403 (LTTVSGNELL) are excised as a propeptide. The 82-residue stretch at 395-476 (TTVSGNELLE…ADCPRNRFHA (82 aa)) folds into the Disintegrin domain. 6 cysteine pairs are disulfide-bonded: cysteine 409/cysteine 424, cysteine 411/cysteine 419, cysteine 418/cysteine 441, cysteine 432/cysteine 438, cysteine 437/cysteine 462, and cysteine 450/cysteine 469. The Cell attachment site signature appears at 454–456 (RGD).

It belongs to the venom metalloproteinase (M12B) family. P-II subfamily. P-IIa sub-subfamily. Monomer (metalloprotease). Requires Zn(2+) as cofactor. The N-terminus is blocked. In terms of processing, not glycosylated. In terms of tissue distribution, expressed by the venom gland.

It localises to the secreted. Its activity is regulated as follows. Inhibited by EDTA, and 1,10-phenanthroline, but not by PMSF. In terms of biological role, non-hemorrhagic proteinase that activates prothrombin (F2) calcium-independently. Activates factor X (F10) and hydrolyzes the Aalpha-chain and more slowly the Bbeta-chain of fibrin and fibrinogen without affecting the gamma chain. It induces neither detachment nor apoptosis of human endothelial cells and is also not able to trigger an endothelial pro-inflammatory cell response. Nitric oxide and prostacyclin levels released by endothelial cells are significantly increased after treatment with insularinase A. Functionally, inhibits ADP-induced platelet aggregation (IC(50)=0.8 uM for native protein). Interestingly, inhibits the adhesion of HUVECs to immobilized fibrinogen at very low concentrations (IC(50)=36 nM). This is Zinc metalloproteinase/disintegrin from Bothrops insularis (Golden lancehead).